A 421-amino-acid polypeptide reads, in one-letter code: Gamma-glutamyl phosphate reductase (421 aa).

It belongs to the gamma-glutamyl phosphate reductase family.

It is found in the cytoplasm. The enzyme catalyses L-glutamate 5-semialdehyde + phosphate + NADP(+) = L-glutamyl 5-phosphate + NADPH + H(+). It functions in the pathway amino-acid biosynthesis; L-proline biosynthesis; L-glutamate 5-semialdehyde from L-glutamate: step 2/2. Its function is as follows. Catalyzes the NADPH-dependent reduction of L-glutamate 5-phosphate into L-glutamate 5-semialdehyde and phosphate. The product spontaneously undergoes cyclization to form 1-pyrroline-5-carboxylate. This is Gamma-glutamyl phosphate reductase from Pseudomonas savastanoi pv. phaseolicola (strain 1448A / Race 6) (Pseudomonas syringae pv. phaseolicola (strain 1448A / Race 6)).